The chain runs to 860 residues: Leucine--tRNA ligase (860 aa).

A 'HIGH' region motif is present at residues P42–H52. A 'KMSKS' region motif is present at residues K619–S623. K622 is an ATP binding site.

This sequence belongs to the class-I aminoacyl-tRNA synthetase family.

It is found in the cytoplasm. It carries out the reaction tRNA(Leu) + L-leucine + ATP = L-leucyl-tRNA(Leu) + AMP + diphosphate. This chain is Leucine--tRNA ligase, found in Yersinia pestis bv. Antiqua (strain Angola).